Reading from the N-terminus, the 179-residue chain is Large ribosomal subunit protein uL5 (179 aa).

Belongs to the universal ribosomal protein uL5 family. As to quaternary structure, part of the 50S ribosomal subunit; part of the 5S rRNA/L5/L18/L25 subcomplex. Contacts the 5S rRNA and the P site tRNA. Forms a bridge to the 30S subunit in the 70S ribosome.

In terms of biological role, this is one of the proteins that bind and probably mediate the attachment of the 5S RNA into the large ribosomal subunit, where it forms part of the central protuberance. In the 70S ribosome it contacts protein S13 of the 30S subunit (bridge B1b), connecting the 2 subunits; this bridge is implicated in subunit movement. Contacts the P site tRNA; the 5S rRNA and some of its associated proteins might help stabilize positioning of ribosome-bound tRNAs. The protein is Large ribosomal subunit protein uL5 of Desulfosudis oleivorans (strain DSM 6200 / JCM 39069 / Hxd3) (Desulfococcus oleovorans).